The sequence spans 1381 residues: DNA-directed RNA polymerase subunit beta' (1381 aa).

4 residues coordinate Zn(2+): cysteine 70, cysteine 72, cysteine 85, and cysteine 88. Mg(2+) contacts are provided by aspartate 461, aspartate 463, and aspartate 465. Zn(2+) contacts are provided by cysteine 801, cysteine 875, cysteine 882, and cysteine 885. Residues 1362–1381 (VEIEGDENSNKKSLDMHAAN) are disordered. The segment covering 1369–1381 (NSNKKSLDMHAAN) has biased composition (basic and acidic residues).

Belongs to the RNA polymerase beta' chain family. The RNAP catalytic core consists of 2 alpha, 1 beta, 1 beta' and 1 omega subunit. When a sigma factor is associated with the core the holoenzyme is formed, which can initiate transcription. Mg(2+) is required as a cofactor. Requires Zn(2+) as cofactor.

It carries out the reaction RNA(n) + a ribonucleoside 5'-triphosphate = RNA(n+1) + diphosphate. In terms of biological role, DNA-dependent RNA polymerase catalyzes the transcription of DNA into RNA using the four ribonucleoside triphosphates as substrates. This Syntrophus aciditrophicus (strain SB) protein is DNA-directed RNA polymerase subunit beta'.